The sequence spans 311 residues: Olfactory receptor 4K1 (311 aa).

Topologically, residues 1–25 (MAHTNESMVSEFVLLGLSNSWGLQL) are extracellular. N-linked (GlcNAc...) asparagine glycosylation is present at Asn5. A helical transmembrane segment spans residues 26 to 49 (FFFAIFSIVYVTSVLGNVLIIVII). The Cytoplasmic portion of the chain corresponds to 50 to 57 (SFDSHLNS). Residues 58 to 79 (PMYFLLSNLSFIDICQSNFATP) traverse the membrane as a helical segment. At 80–100 (KMLVDFFIERKTISFEGCMAQ) the chain is on the extracellular side. Cys97 and Cys189 are joined by a disulfide. Residues 101-120 (IFVLHSFVGSEMMLLVAMAY) traverse the membrane as a helical segment. Residues 121–139 (DRFIAICKPLHYSTIMNRR) are Cytoplasmic-facing. Residues 140–158 (LCVIFVSISWAVGVLHSVS) form a helical membrane-spanning segment. Residues 159–195 (HLAFTVDLPFCGPNEVDSFFCDLPLVIELACMDTYEM) lie on the Extracellular side of the membrane. Residues 196 to 219 (EIMTLTNSGLISLSCFLALIISYT) form a helical membrane-spanning segment. At 220 to 235 (IILIGVRCRSSSGSSK) the chain is on the cytoplasmic side. Residues 236–258 (ALSTLTAHITVVILFFGPCIYFY) traverse the membrane as a helical segment. At 259-269 (IWPFSRLPVDK) the chain is on the extracellular side. Residues 270–289 (FLSVFYTVCTPLLNPIIYSL) form a helical membrane-spanning segment. Residues 290–311 (RNEDVKAAMWKLRNRHVNSWKN) are Cytoplasmic-facing.

Belongs to the G-protein coupled receptor 1 family.

Its subcellular location is the cell membrane. Its function is as follows. Odorant receptor. This chain is Olfactory receptor 4K1 (OR4K1), found in Homo sapiens (Human).